We begin with the raw amino-acid sequence, 168 residues long: Ribosome maturation factor RimM (168 aa).

The 74-residue stretch at 94 to 167 folds into the PRC barrel domain; sequence DGQYYYHQII…FVTVELMEGL (74 aa).

It belongs to the RimM family. As to quaternary structure, binds ribosomal protein uS19.

It localises to the cytoplasm. Its function is as follows. An accessory protein needed during the final step in the assembly of 30S ribosomal subunit, possibly for assembly of the head region. Essential for efficient processing of 16S rRNA. May be needed both before and after RbfA during the maturation of 16S rRNA. It has affinity for free ribosomal 30S subunits but not for 70S ribosomes. The protein is Ribosome maturation factor RimM of Limosilactobacillus reuteri (strain DSM 20016) (Lactobacillus reuteri).